The following is a 337-amino-acid chain: DNA-directed RNA polymerase subunit alpha (337 aa).

The tract at residues 1–226 (MLIAQRPTLT…ELFGLARELN (226 aa)) is alpha N-terminal domain (alpha-NTD). The alpha C-terminal domain (alpha-CTD) stretch occupies residues 243-337 (LAADLALEIE…DTSFAEDEQL (95 aa)). The tract at residues 315–337 (FDPSAVVNDFEDDDTSFAEDEQL) is disordered. Residues 323–337 (DFEDDDTSFAEDEQL) are compositionally biased toward acidic residues.

The protein belongs to the RNA polymerase alpha chain family. As to quaternary structure, homodimer. The RNAP catalytic core consists of 2 alpha, 1 beta, 1 beta' and 1 omega subunit. When a sigma factor is associated with the core the holoenzyme is formed, which can initiate transcription.

It carries out the reaction RNA(n) + a ribonucleoside 5'-triphosphate = RNA(n+1) + diphosphate. DNA-dependent RNA polymerase catalyzes the transcription of DNA into RNA using the four ribonucleoside triphosphates as substrates. The polypeptide is DNA-directed RNA polymerase subunit alpha (Kineococcus radiotolerans (strain ATCC BAA-149 / DSM 14245 / SRS30216)).